A 412-amino-acid polypeptide reads, in one-letter code: Short-chain specific acyl-CoA dehydrogenase, mitochondrial (412 aa).

A mitochondrion-targeting transit peptide spans 1–24 (MAAALLARAGGSLGRALRARDWRR). Threonine 27 is modified (phosphothreonine). Position 51 is an N6-acetyllysine; alternate (lysine 51). Lysine 51 carries the N6-succinyllysine; alternate modification. Lysine 72 is modified (N6-acetyllysine). Lysine 129 is modified (N6-acetyllysine; alternate). N6-succinyllysine; alternate is present on lysine 129. FAD-binding positions include 152–161 (FALSEPGNGS) and 185–187 (WIT). Serine 161 contacts substrate. Lysine 208 carries the post-translational modification N6-acetyllysine. Lysine 262 is modified (N6-acetyllysine; alternate). Lysine 262 is subject to N6-succinyllysine; alternate. Substrate is bound at residue 269–272 (DMGR). Lysine 292 is modified (N6-acetyllysine). Residue arginine 297 coordinates FAD. N6-acetyllysine; alternate is present on lysine 306. Residue lysine 306 is modified to N6-succinyllysine; alternate. FAD is bound at residue 365–369 (QILGG). Residue glutamate 392 is the Proton acceptor of the active site. 394–396 (TSE) provides a ligand contact to FAD.

Belongs to the acyl-CoA dehydrogenase family. As to quaternary structure, homotetramer. Requires FAD as cofactor.

The protein localises to the mitochondrion matrix. It catalyses the reaction a short-chain 2,3-saturated fatty acyl-CoA + oxidized [electron-transfer flavoprotein] + H(+) = a short-chain (2E)-enoyl-CoA + reduced [electron-transfer flavoprotein]. It carries out the reaction butanoyl-CoA + oxidized [electron-transfer flavoprotein] + H(+) = (2E)-butenoyl-CoA + reduced [electron-transfer flavoprotein]. The catalysed reaction is pentanoyl-CoA + oxidized [electron-transfer flavoprotein] + H(+) = (2E)-pentenoyl-CoA + reduced [electron-transfer flavoprotein]. The enzyme catalyses hexanoyl-CoA + oxidized [electron-transfer flavoprotein] + H(+) = (2E)-hexenoyl-CoA + reduced [electron-transfer flavoprotein]. Its pathway is lipid metabolism; mitochondrial fatty acid beta-oxidation. In terms of biological role, short-chain specific acyl-CoA dehydrogenase is one of the acyl-CoA dehydrogenases that catalyze the first step of mitochondrial fatty acid beta-oxidation, an aerobic process breaking down fatty acids into acetyl-CoA and allowing the production of energy from fats. The first step of fatty acid beta-oxidation consists in the removal of one hydrogen from C-2 and C-3 of the straight-chain fatty acyl-CoA thioester, resulting in the formation of trans-2-enoyl-CoA. Among the different mitochondrial acyl-CoA dehydrogenases, short-chain specific acyl-CoA dehydrogenase acts specifically on acyl-CoAs with saturated 4 to 6 carbons long primary chains. The chain is Short-chain specific acyl-CoA dehydrogenase, mitochondrial (Acads) from Rattus norvegicus (Rat).